Consider the following 272-residue polypeptide: RELT-like protein 1 (272 aa).

The first 23 residues, Met-1 to Ser-23, serve as a signal peptide directing secretion. Topologically, residues Ser-24 to Glu-58 are extracellular. Residues Gly-33–Pro-52 are disordered. A helical membrane pass occupies residues Tyr-59–Cys-79. The Cytoplasmic portion of the chain corresponds to His-80–Glu-272. A coiled-coil region spans residues Thr-90–Asn-114. Ser-110 and Ser-115 each carry phosphoserine. 2 disordered regions span residues Asp-146–Thr-171 and Glu-235–Glu-272. Over residues Pro-156–Leu-166 the composition is skewed to pro residues. Positions Glu-235–Ser-245 are enriched in basic and acidic residues. A phosphoserine mark is found at Ser-245 and Ser-248.

Belongs to the RELT family. Interacts with RELT, RELL2, OXSR1 and PLSCR1.

It is found in the cell membrane. In terms of biological role, induces activation of MAPK14/p38 cascade, when overexpressed. Induces apoptosis, when overexpressed. This Mus musculus (Mouse) protein is RELT-like protein 1 (Rell1).